Reading from the N-terminus, the 290-residue chain is Shikimate dehydrogenase (NADP(+)) (290 aa).

Residues 20-22 (SLS) and threonine 67 contribute to the shikimate site. The active-site Proton acceptor is the lysine 71. The shikimate site is built by asparagine 92 and aspartate 107. NADP(+)-binding positions include 132–136 (GAGGA) and methionine 228. Tyrosine 230 provides a ligand contact to shikimate. NADP(+) is bound at residue glycine 251.

Belongs to the shikimate dehydrogenase family. In terms of assembly, homodimer.

It catalyses the reaction shikimate + NADP(+) = 3-dehydroshikimate + NADPH + H(+). The protein operates within metabolic intermediate biosynthesis; chorismate biosynthesis; chorismate from D-erythrose 4-phosphate and phosphoenolpyruvate: step 4/7. Functionally, involved in the biosynthesis of the chorismate, which leads to the biosynthesis of aromatic amino acids. Catalyzes the reversible NADPH linked reduction of 3-dehydroshikimate (DHSA) to yield shikimate (SA). In Citrifermentans bemidjiense (strain ATCC BAA-1014 / DSM 16622 / JCM 12645 / Bem) (Geobacter bemidjiensis), this protein is Shikimate dehydrogenase (NADP(+)).